The sequence spans 357 residues: Peptide chain release factor 1 (357 aa).

At glutamine 234 the chain carries N5-methylglutamine.

Belongs to the prokaryotic/mitochondrial release factor family. Post-translationally, methylated by PrmC. Methylation increases the termination efficiency of RF1.

It localises to the cytoplasm. Its function is as follows. Peptide chain release factor 1 directs the termination of translation in response to the peptide chain termination codons UAG and UAA. The protein is Peptide chain release factor 1 of Frankia casuarinae (strain DSM 45818 / CECT 9043 / HFP020203 / CcI3).